A 231-amino-acid chain; its full sequence is Large ribosomal subunit protein uL1 (231 aa).

This sequence belongs to the universal ribosomal protein uL1 family. As to quaternary structure, part of the 50S ribosomal subunit.

Binds directly to 23S rRNA. The L1 stalk is quite mobile in the ribosome, and is involved in E site tRNA release. Its function is as follows. Protein L1 is also a translational repressor protein, it controls the translation of the L11 operon by binding to its mRNA. This chain is Large ribosomal subunit protein uL1, found in Shouchella clausii (strain KSM-K16) (Alkalihalobacillus clausii).